Reading from the N-terminus, the 78-residue chain is Pigment-dispersing hormone 2 peptides (78 aa).

A signal peptide spans 1–21; that stretch reads MRSGVFVAVLVVVVFALLTQG. At alanine 75 the chain carries Alanine amide.

This sequence belongs to the arthropod PDH family. Eyestalk sinus gland.

The protein resides in the secreted. Functionally, the pigment-dispersing hormone causes the migration of the distal retinal pigment into the proximal end of the pigment chromatophore cells and thus decreases the amount of light entering the retinulas. May also function as a neurotransmitter and/or neuromodulator. The protein is Pigment-dispersing hormone 2 peptides (PDH2) of Callinectes sapidus (Blue crab).